The chain runs to 448 residues: Methylenetetrahydrofolate--tRNA-(uracil-5-)-methyltransferase TrmFO (448 aa).

13–18 (GAGLAG) contributes to the FAD binding site.

It belongs to the MnmG family. TrmFO subfamily. FAD serves as cofactor.

Its subcellular location is the cytoplasm. The catalysed reaction is uridine(54) in tRNA + (6R)-5,10-methylene-5,6,7,8-tetrahydrofolate + NADH + H(+) = 5-methyluridine(54) in tRNA + (6S)-5,6,7,8-tetrahydrofolate + NAD(+). The enzyme catalyses uridine(54) in tRNA + (6R)-5,10-methylene-5,6,7,8-tetrahydrofolate + NADPH + H(+) = 5-methyluridine(54) in tRNA + (6S)-5,6,7,8-tetrahydrofolate + NADP(+). Its function is as follows. Catalyzes the folate-dependent formation of 5-methyl-uridine at position 54 (M-5-U54) in all tRNAs. The polypeptide is Methylenetetrahydrofolate--tRNA-(uracil-5-)-methyltransferase TrmFO (Streptococcus pyogenes serotype M1).